The chain runs to 534 residues: Prolyl 4-hydroxylase subunit alpha-1 (534 aa).

An N-terminal signal peptide occupies residues 1-17; that stretch reads MIWVVLMMAILLPQSLA. Asn-113 is a glycosylation site (N-linked (GlcNAc...) asparagine). The TPR repeat unit spans residues 205–238; that stretch reads VSVLDYLSYAVYQQGDLDKALLLTKKLLELDPEH. A glycan (N-linked (GlcNAc...) asparagine) is linked at Asn-259. A Fe2OG dioxygenase domain is found at 411–519; the sequence is TAEELQVANY…KWVSNKWLHE (109 aa). His-429, Asp-431, and His-500 together coordinate Fe cation. Lys-510 lines the 2-oxoglutarate pocket.

The protein belongs to the P4HA family. Heterotetramer of two alpha-1 chains and two beta chains (P4HB)(the beta chain is the multi-functional PDI), where P4HB plays the role of a structural subunit; this tetramer catalyzes the formation of 4-hydroxyproline in collagen. Fe(2+) serves as cofactor. The cofactor is L-ascorbate. In terms of tissue distribution, expressed at least in brain, heart and lung.

It is found in the endoplasmic reticulum lumen. It catalyses the reaction L-prolyl-[collagen] + 2-oxoglutarate + O2 = trans-4-hydroxy-L-prolyl-[collagen] + succinate + CO2. Its activity is regulated as follows. Inhibited by poly(L-proline). In terms of biological role, catalyzes the post-translational formation of 4-hydroxyproline in -Xaa-Pro-Gly- sequences in collagens and other proteins. The sequence is that of Prolyl 4-hydroxylase subunit alpha-1 (P4ha1) from Mus musculus (Mouse).